Consider the following 129-residue polypeptide: Small ribosomal subunit protein uS11 (129 aa).

It belongs to the universal ribosomal protein uS11 family. Part of the 30S ribosomal subunit. Interacts with proteins S7 and S18. Binds to IF-3.

Functionally, located on the platform of the 30S subunit, it bridges several disparate RNA helices of the 16S rRNA. Forms part of the Shine-Dalgarno cleft in the 70S ribosome. This is Small ribosomal subunit protein uS11 from Anoxybacillus flavithermus (strain DSM 21510 / WK1).